The primary structure comprises 165 residues: Endoribonuclease YbeY (165 aa).

H131, H135, and H141 together coordinate Zn(2+).

It belongs to the endoribonuclease YbeY family. The cofactor is Zn(2+).

Its subcellular location is the cytoplasm. In terms of biological role, single strand-specific metallo-endoribonuclease involved in late-stage 70S ribosome quality control and in maturation of the 3' terminus of the 16S rRNA. This is Endoribonuclease YbeY from Agathobacter rectalis (strain ATCC 33656 / DSM 3377 / JCM 17463 / KCTC 5835 / VPI 0990) (Eubacterium rectale).